A 578-amino-acid polypeptide reads, in one-letter code: Putative transporter B0361.11 (578 aa).

Residues methionine 1 to arginine 30 are disordered. 11 helical membrane passes run isoleucine 51–methionine 71, phenylalanine 148–alanine 168, isoleucine 182–isoleucine 202, alanine 232–valine 252, tyrosine 263–serine 283, isoleucine 339–isoleucine 359, alanine 373–methionine 393, methionine 399–leucine 419, leucine 426–tryptophan 446, serine 457–valine 477, and tryptophan 486–leucine 506. Over residues alanine 532–serine 550 the composition is skewed to low complexity. Residues alanine 532 to serine 561 form a disordered region.

It belongs to the major facilitator superfamily. Sugar transporter (TC 2.A.1.1) family.

It localises to the membrane. This chain is Putative transporter B0361.11, found in Caenorhabditis elegans.